Here is a 393-residue protein sequence, read N- to C-terminus: Endoplasmic reticulum junction formation protein lunapark-A (393 aa).

At 1–45 (MGAVVSRWRAKPSTVEVLEGLDKDIQVLEEYREKNHKQLKLWVYR) the chain is on the cytoplasmic side. A helical membrane pass occupies residues 46-66 (LLLYSALLYLMACAVVYAWYI). Topologically, residues 67–69 (PER) are lumenal. Residues 70-90 (MIGKLIVASPFLLFPLLIWLL) traverse the membrane as a helical segment. Over 91–393 (RKLLIILYNK…EQDVSAMEVE (303 aa)) the chain is Cytoplasmic. Positions 95 to 130 (IILYNKRTERNNEKLEELKAEKKKILEQVMETETYK) form a coiled coil. The segment at 146-209 (KLELETQPIG…PPEKGLSAST (64 aa)) is disordered. Over residues 176–190 (TGRPPPVPVPGPSVP) the composition is skewed to pro residues. Residues 269-294 (CQQCLSHNGMALKEEFEYIAFRCAYC) form a C4-type; plays a role in ER morphology zinc finger. The tract at residues 314 to 393 (AAEAKTSQDP…EQDVSAMEVE (80 aa)) is disordered. 2 stretches are compositionally biased toward basic and acidic residues: residues 340–353 (ESKE…KAGD) and 364–383 (EEMK…KSDG).

The protein belongs to the lunapark family. Homodimer; homodimerization requires the C4-type zinc finger motif and decreases during mitosis in a phosphorylation-dependent manner. In terms of processing, phosphorylated. Phosphorylation occurs during interphase. Phosphorylation also occurs during mitosis; these phosphorylations reduce both its homodimerization and the ER three-way tubular junction formation.

The protein localises to the endoplasmic reticulum membrane. Its function is as follows. Endoplasmic reticulum (ER)-shaping membrane protein that plays a role in determining ER morphology. Involved in the stabilization of nascent three-way ER tubular junctions within the ER network. May also play a role as a curvature-stabilizing protein within three-way ER tubular junction network. The protein is Endoplasmic reticulum junction formation protein lunapark-A (lnpka) of Danio rerio (Zebrafish).